The sequence spans 650 residues: MKLLAITSCPNGIAHTYMAAENLQKAADRLGVSIKVETQGGIGVENKLTEEEIREADAIIIAADRSVNKDRFIGKKLLSVGVQDGIRKPEELIQKALNGDIPVYRSATKSESGNHQEKKQNPIYRHLMNGVSFMVPFIVVGGLLIAVALTLGGEKTPKGLVIPDDSFWKTIEQIGSASFSFMIPILAGYIAYSIADKPGLVPGMIGGYIAATGSFYDSASGAGFLGGIIAGFLAGYAALWIKKLKVPKAIQPIMPIIIIPVFASLIVGLAFVFLIGAPVAQIFASLTVWLAGMKGSSSILLALILGAMISFDMGGPVNKVAFLFGSAMIGEGNYEIMGPIAVAICIPPIGLGIATFLGKRKFEASQREMGKAAFTMGLFGITEGAIPFAAQDPLRVIPSIMAGSMTGSVIAMIGNVGDRVAHGGPIVAVLGAVDHVLMFFIAVIAGSLVTALFVNVLKKDITASPVLSETAPTSAPSEAAAANEIKQPIQSQKAEMSEFKKLTDIISPELIEPNLSGETSDDIIDELIQKLSRRGALLSESGFKQAILNREQQGTTAIGMNIAIPHGKSEAVREPSVAFGIKRSGVDWNSLDGSEAKLIFMIAVPKESGGNQHLKILQMLSRKLMDDNYRERLLSVQTTEEAYKLLEEIE.

The 98-residue stretch at 1–98 (MKLLAITSCP…PEELIQKALN (98 aa)) folds into the PTS EIIB type-2 domain. Catalysis depends on C9, which acts as the Phosphocysteine intermediate; for EIIB activity. Residues 123-456 (IYRHLMNGVS…SLVTALFVNV (334 aa)) enclose the PTS EIIC type-2 domain. A run of 7 helical transmembrane segments spans residues 133-153 (FMVP…TLGG), 174-194 (IGSA…AYSI), 199-219 (GLVP…YDSA), 221-241 (GAGF…ALWI), 256-276 (IIII…FLIG), 297-317 (SSIL…GGPV), and 336-356 (IMGP…IATF). S365 is modified (phosphoserine). 3 consecutive transmembrane segments (helical) span residues 369–389 (MGKA…IPFA), 396–416 (VIPS…IGNV), and 436–456 (VLMF…FVNV). The 146-residue stretch at 504-649 (DIISPELIEP…EEAYKLLEEI (146 aa)) folds into the PTS EIIA type-2 domain. The active-site Tele-phosphohistidine intermediate; for EIIA activity is the H566.

The protein localises to the cell membrane. The enzyme catalyses D-mannose(out) + N(pros)-phospho-L-histidyl-[protein] = D-mannose 6-phosphate(in) + L-histidyl-[protein]. Functionally, the phosphoenolpyruvate-dependent sugar phosphotransferase system (sugar PTS), a major carbohydrate active -transport system, catalyzes the phosphorylation of incoming sugar substrates concomitantly with their translocation across the cell membrane. This system is involved in mannose transport. In Bacillus subtilis (strain 168), this protein is PTS system mannose-specific EIIBCA component (manP).